Consider the following 1136-residue polypeptide: MPKRTDIKSVMVIGSGPIVIGQAAEFDYSGTQACRVLREEGVRVILVNSNPATIMTDPEMADATYIDPISTPILEKIIAKERPDALLPTLGGQTALNAAVALGEAGVLKKYNVELIGASLEAIDRGEDRESFKKVVKEAGAESARSDIAHTLEEVDAIAERFGFPLVVRPSFTMGGLGSGIAHDTEELHRIAGAGIHYSPTDEVLIEEGIEGWKEYELELMRDRNDNVVVVCPIENVDPVGVHTGDSITVAPVFTLTDREYQKLRDIGIAIIRGVGVDTGGCNIQFAIHPDTGRIIVIEMNPRVSRSSALASKATGFPIAKIATKLALGYTLDEIQNDITRSTPASFEPTIDYVVTKVPRFAFEKFPGADPTLTTSMKSVGEAMALAGNFQESLGKAMRSIDKRHMGFSWDGEKPSEGEVHELLEQMRIPTEHRYLQVMRAIWGGATPEQIFNATKIDPWFIDQFFQINATAMQVRGAETLSKRLLRKAKLAGLSDVQIAHLRRLGDEGENTIRELRWNYGLHPVFKTVDTCAAEFAAQTPYYYSCYADETELRKREREAVIILGSGPNRIGQGIEFDYTCVHAVQELGKDYDTIMVNCNPETVSTDYDMSDRLYFEPLTFEDVLEIYEAEKKQGPIKGVIVQLGGQTPLSLAARLKAAGVPILGTTPEAIDLAENRELFGEVLRQEHLNAPRFGTALSLEEAREAAHNIGYPVLVRPSYVLGGRGMEIVYDDAQLETYVNRALSEAKADTVVSGRLPSPLLIDKFLQDAIEIDVDALFDGEELYIGGIMEHIEEAGVHSGDAACTLPPSTLSDDQIRRLREATLAIAKGCQVRGLMNVQYAFMANTLYVIEANPRASRTVPFASKATGVALAKAAARIMAGETIEQQRENGLLLPYGDGGDVRLGQQVAVKESVLPFKRFRTPVGKTVDILLGPEMRSTGEVMGFDRDFPHAFAKSQLASYEGGLPTNGNVFISVNDTDKRQLPLFAVRLVELGFEIWATEGTASVLRRYGIESKIVDKIHSRVDTDPEHPIEIQHAAGSVGKNVVELIEEGQIDLILNTPNSRGSRSDGYSIRAAAIAADIPQYTTMTEFSAVLLAIEAVKKNDYEVMSIQEHSRELYELERKHKEEGEEARAQ.

Residues 1 to 402 (MPKRTDIKSV…SLGKAMRSID (402 aa)) form a carboxyphosphate synthetic domain region. Residues Arg-129, Arg-169, Gly-175, Gly-176, Glu-208, Ile-210, Glu-215, Gly-241, Val-242, His-243, Gln-285, and Glu-299 each coordinate ATP. In terms of domain architecture, ATP-grasp 1 spans 133–328 (KKVVKEAGAE…IAKIATKLAL (196 aa)). Residues Gln-285, Glu-299, and Asn-301 each coordinate Mg(2+). Residues Gln-285, Glu-299, and Asn-301 each coordinate Mn(2+). Residues 403-551 (KRHMGFSWDG…YYYSCYADET (149 aa)) are oligomerization domain. The tract at residues 552–962 (ELRKREREAV…AFAKSQLASY (411 aa)) is carbamoyl phosphate synthetic domain. Residues 681-881 (GEVLRQEHLN…LAKAAARIMA (201 aa)) form the ATP-grasp 2 domain. 10 residues coordinate ATP: Arg-717, Lys-765, Leu-767, Glu-772, Gly-797, Val-798, His-799, Ser-800, Gln-840, and Glu-852. Positions 840, 852, and 854 each coordinate Mg(2+). Positions 840, 852, and 854 each coordinate Mn(2+). The allosteric domain stretch occupies residues 963 to 1136 (EGGLPTNGNV…KEEGEEARAQ (174 aa)). Positions 964–1122 (GGLPTNGNVF…QEHSRELYEL (159 aa)) constitute an MGS-like domain.

This sequence belongs to the CarB family. Composed of two chains; the small (or glutamine) chain promotes the hydrolysis of glutamine to ammonia, which is used by the large (or ammonia) chain to synthesize carbamoyl phosphate. Tetramer of heterodimers (alpha,beta)4. The cofactor is Mg(2+). Mn(2+) serves as cofactor.

It carries out the reaction hydrogencarbonate + L-glutamine + 2 ATP + H2O = carbamoyl phosphate + L-glutamate + 2 ADP + phosphate + 2 H(+). The catalysed reaction is hydrogencarbonate + NH4(+) + 2 ATP = carbamoyl phosphate + 2 ADP + phosphate + 2 H(+). It participates in amino-acid biosynthesis; L-arginine biosynthesis; carbamoyl phosphate from bicarbonate: step 1/1. It functions in the pathway pyrimidine metabolism; UMP biosynthesis via de novo pathway; (S)-dihydroorotate from bicarbonate: step 1/3. In terms of biological role, large subunit of the glutamine-dependent carbamoyl phosphate synthetase (CPSase). CPSase catalyzes the formation of carbamoyl phosphate from the ammonia moiety of glutamine, carbonate, and phosphate donated by ATP, constituting the first step of 2 biosynthetic pathways, one leading to arginine and/or urea and the other to pyrimidine nucleotides. The large subunit (synthetase) binds the substrates ammonia (free or transferred from glutamine from the small subunit), hydrogencarbonate and ATP and carries out an ATP-coupled ligase reaction, activating hydrogencarbonate by forming carboxy phosphate which reacts with ammonia to form carbamoyl phosphate. The protein is Carbamoyl phosphate synthase large chain of Bifidobacterium animalis subsp. lactis (strain AD011).